The sequence spans 226 residues: uncharacterized protein (226 aa).

One can recognise a Response regulatory domain in the interval 1 to 112 (MLVEDDHSIS…ELTARVKAAI (112 aa)). Residue aspartate 48 is modified to 4-aspartylphosphate. The segment at residues 126-225 (NKVIRIHQLA…LWGIGYKLGE (100 aa)) is a DNA-binding region (ompR/PhoB-type).

Post-translationally, phosphorylated by YcbM.

Its subcellular location is the cytoplasm. Member of the two-component regulatory system YcbM/YcbL. This is an uncharacterized protein from Bacillus subtilis (strain 168).